The sequence spans 129 residues: uncharacterized protein (129 aa).

The helical transmembrane segment at 77–97 (ILAVFIISFIIVVVGVLLLGL) threads the bilayer. Positions 109–129 (SSNDKKLQSNDEEKQALAEKA) are disordered. Positions 111 to 129 (NDKKLQSNDEEKQALAEKA) are enriched in basic and acidic residues.

Its subcellular location is the vacuole membrane. This is an uncharacterized protein from Saccharomyces cerevisiae (strain ATCC 204508 / S288c) (Baker's yeast).